A 475-amino-acid chain; its full sequence is Vasculin-like protein 1 (475 aa).

2 positions are modified to phosphoserine: Ser49 and Ser76. Disordered regions lie at residues 92-115 (NLSGWHGSSRGHDGMSQRAGGSTG) and 160-191 (PSLNPEAGKQNQPCRPIGTPSGVWENPPSAKQ). Ser202 carries the phosphoserine modification. Disordered regions lie at residues 237–271 (LVPKPAPPPSKPNAWKANRMEHKPGSLSSSREAAL) and 292–318 (PKESPSSTTPPIEISSSRLTKLTRRTT). Positions 294–311 (ESPSSTTPPIEISSSRLT) are enriched in low complexity. Thr300 is subject to Phosphothreonine. Ser383 carries the post-translational modification Phosphoserine. Residues 456–475 (CEDSDTETSSSETSDDDAWK) form a disordered region.

This sequence belongs to the vasculin family.

The protein resides in the nucleus. Possible transcription factor. This Rattus norvegicus (Rat) protein is Vasculin-like protein 1 (Gpbp1l1).